The primary structure comprises 381 residues: Transaldolase 2 (381 aa).

Catalysis depends on Lys-141, which acts as the Schiff-base intermediate with substrate.

Belongs to the transaldolase family. Type 2 subfamily.

The protein resides in the cytoplasm. It carries out the reaction D-sedoheptulose 7-phosphate + D-glyceraldehyde 3-phosphate = D-erythrose 4-phosphate + beta-D-fructose 6-phosphate. It functions in the pathway carbohydrate degradation; pentose phosphate pathway; D-glyceraldehyde 3-phosphate and beta-D-fructose 6-phosphate from D-ribose 5-phosphate and D-xylulose 5-phosphate (non-oxidative stage): step 2/3. Functionally, transaldolase is important for the balance of metabolites in the pentose-phosphate pathway. In Nostoc punctiforme (strain ATCC 29133 / PCC 73102), this protein is Transaldolase 2 (tal2).